The sequence spans 363 residues: tRNA(Met) cytidine acetate ligase (363 aa).

ATP contacts are provided by residues 7-20 (IAEF…HKYL), glycine 96, asparagine 152, and arginine 175.

The protein belongs to the TmcAL family.

The protein resides in the cytoplasm. The catalysed reaction is cytidine(34) in elongator tRNA(Met) + acetate + ATP = N(4)-acetylcytidine(34) in elongator tRNA(Met) + AMP + diphosphate. In terms of biological role, catalyzes the formation of N(4)-acetylcytidine (ac(4)C) at the wobble position of elongator tRNA(Met), using acetate and ATP as substrates. First activates an acetate ion to form acetyladenylate (Ac-AMP) and then transfers the acetyl group to tRNA to form ac(4)C34. This chain is tRNA(Met) cytidine acetate ligase, found in Streptococcus gordonii (strain Challis / ATCC 35105 / BCRC 15272 / CH1 / DL1 / V288).